Consider the following 178-residue polypeptide: Nucleoside-triphosphatase THEP1 (178 aa).

ATP is bound by residues 7–14 (GEPGVGKT) and 102–109 (VIIIDEIG).

This sequence belongs to the THEP1 NTPase family. As to quaternary structure, monomer.

The catalysed reaction is a ribonucleoside 5'-triphosphate + H2O = a ribonucleoside 5'-diphosphate + phosphate + H(+). In terms of biological role, has nucleotide phosphatase activity towards ATP, GTP, CTP, TTP and UTP. May hydrolyze nucleoside diphosphates with lower efficiency. Does not have kinase activity. The polypeptide is Nucleoside-triphosphatase THEP1 (Aquifex aeolicus (strain VF5)).